Consider the following 225-residue polypeptide: Transmembrane emp24 domain-containing protein p24delta11 (225 aa).

An N-terminal signal peptide occupies residues methionine 1–serine 35. Topologically, residues methionine 36–methionine 193 are lumenal. The region spanning threonine 45–lysine 160 is the GOLD domain. The stretch at leucine 175–serine 188 forms a coiled coil. At arginine 178 the chain carries Omega-N-methylated arginine. Asparagine 186 carries an N-linked (GlcNAc...) asparagine glycan. Residues alanine 194 to leucine 210 traverse the membrane as a helical segment. Topologically, residues glutamine 211–leucine 225 are cytoplasmic. A COPII vesicle coat-binding motif is present at residues phenylalanine 218 to leucine 219. The COPI vesicle coat-binding signature appears at phenylalanine 218–leucine 225.

The protein belongs to the EMP24/GP25L family. Probably oligomerizes with other members of the EMP24/GP25L family. Associates with the COPI vesicle coat (coatomer). Associates with the COPII vesicle coat (coatomer).

It is found in the endoplasmic reticulum membrane. The protein localises to the golgi apparatus. Its subcellular location is the cis-Golgi network membrane. It localises to the golgi stack membrane. Its function is as follows. Involved in vesicular protein trafficking. Mainly functions in the early secretory pathway. Thought to act as cargo receptor at the lumenal side for incorporation of secretory cargo molecules into transport vesicles and to be involved in vesicle coat formation at the cytoplasmic side. The polypeptide is Transmembrane emp24 domain-containing protein p24delta11 (Arabidopsis thaliana (Mouse-ear cress)).